The sequence spans 360 residues: Phospho-N-acetylmuramoyl-pentapeptide-transferase (360 aa).

The next 10 membrane-spanning stretches (helical) occupy residues 27-47, 73-93, 97-117, 145-165, 168-188, 199-219, 236-256, 263-283, 288-308, and 337-357; these read ILGV…VIVL, TMGG…WGDL, YVWV…VDDY, AFYL…VPLF, VAIP…VGTS, GLAI…AYLT, SGEL…FLWF, IFMG…IAVI, LVLF…ILQV, and KVIV…FATL.

The protein belongs to the glycosyltransferase 4 family. MraY subfamily. It depends on Mg(2+) as a cofactor.

Its subcellular location is the cell inner membrane. The catalysed reaction is UDP-N-acetyl-alpha-D-muramoyl-L-alanyl-gamma-D-glutamyl-meso-2,6-diaminopimeloyl-D-alanyl-D-alanine + di-trans,octa-cis-undecaprenyl phosphate = di-trans,octa-cis-undecaprenyl diphospho-N-acetyl-alpha-D-muramoyl-L-alanyl-D-glutamyl-meso-2,6-diaminopimeloyl-D-alanyl-D-alanine + UMP. It functions in the pathway cell wall biogenesis; peptidoglycan biosynthesis. In terms of biological role, catalyzes the initial step of the lipid cycle reactions in the biosynthesis of the cell wall peptidoglycan: transfers peptidoglycan precursor phospho-MurNAc-pentapeptide from UDP-MurNAc-pentapeptide onto the lipid carrier undecaprenyl phosphate, yielding undecaprenyl-pyrophosphoryl-MurNAc-pentapeptide, known as lipid I. The polypeptide is Phospho-N-acetylmuramoyl-pentapeptide-transferase (Marinomonas sp. (strain MWYL1)).